The chain runs to 314 residues: Polyadenylate-binding protein-interacting protein 8 (314 aa).

The disordered stretch occupies residues 1 to 47 (MAAITEMATDSNDVINDGGTGDGIEKSTDSKPEIESDDLKPKSKPEY). Positions 23 to 47 (GIEKSTDSKPEIESDDLKPKSKPEY) are enriched in basic and acidic residues. Residues 59-69 (KLNPEAKEFFP) carry the PAM2-like motif. The short motif at 99 to 112 (RRRRNNYNQGRRVR) is the Bipartite nuclear localization signal element. 2 consecutive RRM domains span residues 128-203 (RTVY…PSKT) and 225-301 (RTIY…PSKT).

As to quaternary structure, interacts with MPC. As to expression, expressed in cauline leaves, stems, rosette leaves, immature siliques and primary inflorescences but at a low level.

The protein resides in the nucleus. This chain is Polyadenylate-binding protein-interacting protein 8 (CID8), found in Arabidopsis thaliana (Mouse-ear cress).